The following is a 227-amino-acid chain: Pyridoxine/pyridoxamine 5'-phosphate oxidase (227 aa).

Residues 23-26 (RREY) and K81 contribute to the substrate site. FMN-binding positions include 76–81 (RIVLLK), 91–92 (YT), R97, K98, and Q120. Residues Y138, R142, and S146 each contribute to the substrate site. Residues 155–156 (QS) and W200 contribute to the FMN site. 206 to 208 (RLH) is a binding site for substrate. R210 is a binding site for FMN.

The protein belongs to the pyridoxamine 5'-phosphate oxidase family. In terms of assembly, homodimer. FMN serves as cofactor.

It catalyses the reaction pyridoxamine 5'-phosphate + O2 + H2O = pyridoxal 5'-phosphate + H2O2 + NH4(+). The catalysed reaction is pyridoxine 5'-phosphate + O2 = pyridoxal 5'-phosphate + H2O2. It participates in cofactor metabolism; pyridoxal 5'-phosphate salvage; pyridoxal 5'-phosphate from pyridoxamine 5'-phosphate: step 1/1. It functions in the pathway cofactor metabolism; pyridoxal 5'-phosphate salvage; pyridoxal 5'-phosphate from pyridoxine 5'-phosphate: step 1/1. Catalyzes the oxidation of either pyridoxine 5'-phosphate (PNP) or pyridoxamine 5'-phosphate (PMP) into pyridoxal 5'-phosphate (PLP). The sequence is that of Pyridoxine/pyridoxamine 5'-phosphate oxidase from Pectobacterium atrosepticum (strain SCRI 1043 / ATCC BAA-672) (Erwinia carotovora subsp. atroseptica).